Consider the following 271-residue polypeptide: Dioscorin dioA3 (271 aa).

Positions 1–21 are cleaved as a signal peptide; sequence MSSSTLLHLLLLSSLLFSCLS. Positions 28–262 constitute an Alpha-carbonic anhydrase domain; the sequence is DEFSYIEGNP…TNFRSVFYFE (235 aa). The cysteines at positions 53 and 212 are disulfide-linked. H94 (proton acceptor) is an active-site residue. L-ascorbate is bound by residues D95, 120 to 122, Q139, and 208 to 209; these read HFH and TA.

It belongs to the alpha-carbonic anhydrase family. In terms of assembly, monomer. Homodimer. Post-translationally, not glycosylated. In terms of tissue distribution, expressed in tuber (at protein level).

The enzyme catalyses hydrogencarbonate + H(+) = CO2 + H2O. The catalysed reaction is 2 monodehydro-L-ascorbate radical + NADH + H(+) = 2 L-ascorbate + NAD(+). The carbonate dehydratase activity is not substantially changed by the addition of Zn(2+). Storage protein of tuber. Involved in protection against oxidative stress. Has carbonate dehydratase, trypsin inhibitor, dehydroascorbate (DHA) reductase and monodehydroascorbate (MDA) reductase activities. Catalyzes the reactions of carbonate dehydratase and DHA reductase independently of zinc and glutathione (GSH). The coupled reaction is capable of recycling a plant antioxidant ascorbate using ubiquitous compounds H(2)O and CO(2). Exhibits antioxidant activity. Able to scavenge 1,1-diphenyl-2-picrylhydrazyl (DPPH) radical. Exhibits immunomodulatory activity. Activates Toll-like receptor 4 signaling pathways by up-regulating the gene expression of pro-inflammatory cytokines, such as tumor necrosis factor alpha, interleukin-1 beta and interleukin-6, and chemokines RANTES and MCP-1, in mouse RAW 264.7 macrophages. Stimulates the phagocytosis of E.coli by the LPS-treated mouse macrophages. This chain is Dioscorin dioA3, found in Dioscorea japonica (Japanese yam).